Reading from the N-terminus, the 210-residue chain is Dephospho-CoA kinase (210 aa).

The region spanning 4 to 202 (WVGLTGGIGS…AFYSGIFASK (199 aa)) is the DPCK domain. 12–17 (GSGKSA) serves as a coordination point for ATP.

The protein belongs to the CoaE family.

It localises to the cytoplasm. The catalysed reaction is 3'-dephospho-CoA + ATP = ADP + CoA + H(+). Its pathway is cofactor biosynthesis; coenzyme A biosynthesis; CoA from (R)-pantothenate: step 5/5. Functionally, catalyzes the phosphorylation of the 3'-hydroxyl group of dephosphocoenzyme A to form coenzyme A. The chain is Dephospho-CoA kinase from Neisseria meningitidis serogroup B (strain ATCC BAA-335 / MC58).